Consider the following 304-residue polypeptide: Sulfate adenylyltransferase subunit 2 1 (304 aa).

Belongs to the PAPS reductase family. CysD subfamily. As to quaternary structure, heterodimer composed of CysD, the smaller subunit, and CysN.

The enzyme catalyses sulfate + ATP + H(+) = adenosine 5'-phosphosulfate + diphosphate. The protein operates within sulfur metabolism; hydrogen sulfide biosynthesis; sulfite from sulfate: step 1/3. Its function is as follows. With CysN forms the ATP sulfurylase (ATPS) that catalyzes the adenylation of sulfate producing adenosine 5'-phosphosulfate (APS) and diphosphate, the first enzymatic step in sulfur assimilation pathway. APS synthesis involves the formation of a high-energy phosphoric-sulfuric acid anhydride bond driven by GTP hydrolysis by CysN coupled to ATP hydrolysis by CysD. In Marinobacter nauticus (strain ATCC 700491 / DSM 11845 / VT8) (Marinobacter aquaeolei), this protein is Sulfate adenylyltransferase subunit 2 1.